The sequence spans 369 residues: Flagellar P-ring protein (369 aa).

The N-terminal stretch at 1–22 (MIKLKQLIAATLLLSTAFGVHA) is a signal peptide.

This sequence belongs to the FlgI family. In terms of assembly, the basal body constitutes a major portion of the flagellar organelle and consists of four rings (L,P,S, and M) mounted on a central rod.

Its subcellular location is the periplasm. It is found in the bacterial flagellum basal body. Its function is as follows. Assembles around the rod to form the L-ring and probably protects the motor/basal body from shearing forces during rotation. The protein is Flagellar P-ring protein of Pseudomonas savastanoi pv. phaseolicola (strain 1448A / Race 6) (Pseudomonas syringae pv. phaseolicola (strain 1448A / Race 6)).